The following is a 139-amino-acid chain: Myosin light chain kinase, smooth muscle (139 aa).

A disordered region spans residues 48-97 (APTGENAKAPEMKARRPKSSLPPVLGTESDATVKKKPAPKTPPKAAMPPQ).

This sequence belongs to the protein kinase superfamily. CAMK Ser/Thr protein kinase family. As to quaternary structure, interacts with SVIL. In terms of processing, the C-terminus is deglutamylated by AGTPBP1/CCP1, AGBL1/CCP4 and AGBL4/CCP6, leading to the formation of Myosin light chain kinase, smooth muscle, deglutamylated form. The consequences of C-terminal deglutamylation are unknown.

It carries out the reaction L-seryl-[myosin light chain] + ATP = O-phospho-L-seryl-[myosin light chain] + ADP + H(+). The enzyme catalyses L-threonyl-[myosin light chain] + ATP = O-phospho-L-threonyl-[myosin light chain] + ADP + H(+). In terms of biological role, phosphorylates a specific serine in the N-terminus of a myosin light chain. Also regulates actin-myosin interaction through a non-kinase activity. The polypeptide is Myosin light chain kinase, smooth muscle (MYLK) (Sus scrofa (Pig)).